A 163-amino-acid polypeptide reads, in one-letter code: Photosystem II extrinsic protein V (163 aa).

The signal sequence occupies residues 1 to 26 (MLRKLILITVATVFFACQLLVNPVSA). The heme c site is built by cysteine 63, cysteine 66, histidine 67, and histidine 118.

Belongs to the cytochrome c family. PsbV subfamily. PSII is composed of 1 copy each of membrane proteins PsbA, PsbB, PsbC, PsbD, PsbE, PsbF, PsbH, PsbI, PsbJ, PsbK, PsbL, PsbM, PsbT, PsbX, PsbY, PsbZ, Psb30/Ycf12, peripheral proteins PsbO, CyanoQ (PsbQ), PsbU, PsbV and a large number of cofactors. It forms dimeric complexes. Heme c is required as a cofactor.

It localises to the cellular thylakoid membrane. One of the extrinsic, lumenal subunits of photosystem II (PSII). PSII is a light-driven water plastoquinone oxidoreductase, using light energy to abstract electrons from H(2)O, generating a proton gradient subsequently used for ATP formation. The extrinsic proteins stabilize the structure of photosystem II oxygen-evolving complex (OEC), the ion environment of oxygen evolution and protect the OEC against heat-induced inactivation. Low-potential cytochrome c that plays a role in the OEC of PSII. This chain is Photosystem II extrinsic protein V, found in Aphanothece halophytica.